A 280-amino-acid chain; its full sequence is uncharacterized protein (280 aa).

Disordered stretches follow at residues 20–41 (DVKK…QQQQ), 170–199 (INSP…KDKA), and 251–280 (GNSK…SFSF). Positions 25–41 (QQQQQQQPQAPPQQQQQ) are enriched in low complexity. Positions 178–199 (EEEKPQLSKKEEPEWLKGKDKA) are enriched in basic and acidic residues.

This is an uncharacterized protein from Dictyostelium discoideum (Social amoeba).